Consider the following 884-residue polypeptide: Putative GTP diphosphokinase RSH1, chloroplastic (884 aa).

The transit peptide at 1–55 (MTSASSMSVSVECVNICNLTKGDGNARSDCSALSCAWKAPRALTGFLASTAHPPV) directs the protein to the chloroplast. The 108-residue stretch at 172-279 (FIIHPVAVAR…VKLADRLHNM (108 aa)) folds into the HD domain. Residues 563–626 (LGSRVFVFTP…ENAEVVEIVT (64 aa)) enclose the TGS domain. Polar residues predominate over residues 711-727 (QSQDKSRDTTPAPQNGS). A disordered region spans residues 711-747 (QSQDKSRDTTPAPQNGSVWAPKVNGKHNKAIKNSSSD). One can recognise an ACT domain in the interval 797–868 (WLCVVSMDRK…LVLGVLGWSS (72 aa)).

This sequence belongs to the RelA/SpoT family. In terms of assembly, interacts with RPP4. Interacts with RPP5. As to expression, expressed in hypocotyls, shoots, cotyledons, rosette leaves, sepals and pistils.

The protein resides in the plastid. It localises to the chloroplast. It carries out the reaction GTP + ATP = guanosine 3'-diphosphate 5'-triphosphate + AMP. In terms of biological role, may be involved in a rapid plant ppGpp (guanosine 3'-diphosphate 5'-diphosphate)-mediated response to pathogens and other stresses. Unable to functionally complement E.coli relA mutants. The polypeptide is Putative GTP diphosphokinase RSH1, chloroplastic (RSH1) (Arabidopsis thaliana (Mouse-ear cress)).